A 254-amino-acid chain; its full sequence is E3 ubiquitin-protein ligase NEURL3 (254 aa).

In terms of domain architecture, NHR spans 17-174 (ALSFHGDATG…TTKAIELLDP (158 aa)). The segment at 197-236 (CVICFHNTANTRLMPCGHSQFCGSCAWHIFKDTARCPMCR) adopts an RING-type zinc-finger fold.

It is found in the cytoplasm. The catalysed reaction is S-ubiquitinyl-[E2 ubiquitin-conjugating enzyme]-L-cysteine + [acceptor protein]-L-lysine = [E2 ubiquitin-conjugating enzyme]-L-cysteine + N(6)-ubiquitinyl-[acceptor protein]-L-lysine.. The protein operates within protein modification; protein ubiquitination. E3 ubiquitin-protein ligase that plays a role in various biological processes such as lung development or innate immunity. Seems to utilize UBE2E1. Promotes innate antiviral response by catalyzing 'Lys-63'-linked ubiquitination of IRF7. Also inhibits hepatitis C virus assembly by directly binding to viral E1 envelope glycoprotein to disrupt its interaction with E2. Plays an essential role in TLR4-mediated activation of MAPK pathways by promoting 'Lys-48'-linked polyubiquitination of the phosphatase DUSP1/MKP1. This chain is E3 ubiquitin-protein ligase NEURL3 (Neurl3), found in Rattus norvegicus (Rat).